A 74-amino-acid chain; its full sequence is Small ribosomal subunit protein bS18 (74 aa).

Belongs to the bacterial ribosomal protein bS18 family. As to quaternary structure, part of the 30S ribosomal subunit. Forms a tight heterodimer with protein bS6.

Binds as a heterodimer with protein bS6 to the central domain of the 16S rRNA, where it helps stabilize the platform of the 30S subunit. The chain is Small ribosomal subunit protein bS18 from Novosphingobium aromaticivorans (strain ATCC 700278 / DSM 12444 / CCUG 56034 / CIP 105152 / NBRC 16084 / F199).